The following is a 356-amino-acid chain: DNA polymerase IV (356 aa).

Residues 7–188 (IIHIDMDAFY…IPVTKFYGVG (182 aa)) form the UmuC domain. Positions 11 and 106 each coordinate Mg(2+). Residue E107 is part of the active site.

This sequence belongs to the DNA polymerase type-Y family. Monomer. Mg(2+) serves as cofactor.

The protein resides in the cytoplasm. It carries out the reaction DNA(n) + a 2'-deoxyribonucleoside 5'-triphosphate = DNA(n+1) + diphosphate. Functionally, poorly processive, error-prone DNA polymerase involved in untargeted mutagenesis. Copies undamaged DNA at stalled replication forks, which arise in vivo from mismatched or misaligned primer ends. These misaligned primers can be extended by PolIV. Exhibits no 3'-5' exonuclease (proofreading) activity. May be involved in translesional synthesis, in conjunction with the beta clamp from PolIII. This chain is DNA polymerase IV, found in Listeria welshimeri serovar 6b (strain ATCC 35897 / DSM 20650 / CCUG 15529 / CIP 8149 / NCTC 11857 / SLCC 5334 / V8).